A 249-amino-acid chain; its full sequence is Pyridoxine 5'-phosphate synthase (249 aa).

Residue Asn7 coordinates 3-amino-2-oxopropyl phosphate. Asp9 to His10 is a binding site for 1-deoxy-D-xylulose 5-phosphate. A 3-amino-2-oxopropyl phosphate-binding site is contributed by Arg18. His43 acts as the Proton acceptor in catalysis. 1-deoxy-D-xylulose 5-phosphate-binding residues include Arg45 and His50. The active-site Proton acceptor is Glu70. A 1-deoxy-D-xylulose 5-phosphate-binding site is contributed by Thr100. The Proton donor role is filled by His190. Residues Gly191 and Gly212–His213 each bind 3-amino-2-oxopropyl phosphate.

This sequence belongs to the PNP synthase family. As to quaternary structure, homooctamer; tetramer of dimers.

It is found in the cytoplasm. The catalysed reaction is 3-amino-2-oxopropyl phosphate + 1-deoxy-D-xylulose 5-phosphate = pyridoxine 5'-phosphate + phosphate + 2 H2O + H(+). It participates in cofactor biosynthesis; pyridoxine 5'-phosphate biosynthesis; pyridoxine 5'-phosphate from D-erythrose 4-phosphate: step 5/5. Catalyzes the complicated ring closure reaction between the two acyclic compounds 1-deoxy-D-xylulose-5-phosphate (DXP) and 3-amino-2-oxopropyl phosphate (1-amino-acetone-3-phosphate or AAP) to form pyridoxine 5'-phosphate (PNP) and inorganic phosphate. The sequence is that of Pyridoxine 5'-phosphate synthase from Synechococcus sp. (strain CC9605).